A 396-amino-acid chain; its full sequence is MSETTATSTTTTKTTDKDNVNNNNNNENKEEKQPINIIVLGMAGSGKTTLLQRIRAHLYENKIPGYIINLDPAVSKLPYTPNIDIRDTVNYKEVMKQFNLGPNGGIVTSLNLFSTKFDKVLEIVEKRSSSLDYIILDTPGQIEVFTWSASGTIITELMASSFPTVLVYVVDTPRTVDPTTFMSNMLYACSIMYKSKLPMVVAFNKIDITNHRFAEEWMSDFDSFQDALTNDPTYMGNLTRSLSLVLEEFYSTLQSVGVSAVDGSGIDEFFEKIGLAAQDYHKYYKADLEKIKKQKSDKEQAEANKNWEKLKRDLEESKGAKVEYDFKKEKKRENQEKTKNIYDDEEDDYRDDRDMEDSGEYESYEDEQEEGDYENEEERLEDQRAYESLMSSIKKI.

Residues 1–13 (MSETTATSTTTTK) are compositionally biased toward low complexity. Residues 1-30 (MSETTATSTTTTKTTDKDNVNNNNNNENKE) are disordered. 44-49 (GSGKTT) contributes to the GTP binding site. Positions 101–103 (GPN) match the Gly-Pro-Asn (GPN)-loop; involved in dimer interface motif. 204-207 (NKID) is a GTP binding site. The stretch at 284-387 (YKADLEKIKK…ERLEDQRAYE (104 aa)) forms a coiled coil. The span at 325–342 (DFKKEKKRENQEKTKNIY) shows a compositional bias: basic and acidic residues. A disordered region spans residues 325-396 (DFKKEKKREN…ESLMSSIKKI (72 aa)). Acidic residues predominate over residues 343 to 380 (DDEEDDYRDDRDMEDSGEYESYEDEQEEGDYENEEERL).

It belongs to the GPN-loop GTPase family. In terms of assembly, heterodimer with gpn3. Binds to RNA polymerase II (RNAPII).

It localises to the cytoplasm. The protein localises to the nucleus. Its function is as follows. Small GTPase required for proper nuclear import of RNA polymerase II (RNAPII). May act at an RNAP assembly step prior to nuclear import. The sequence is that of GPN-loop GTPase 1 (gpn1) from Dictyostelium discoideum (Social amoeba).